A 138-amino-acid chain; its full sequence is Putative pre-16S rRNA nuclease (138 aa).

The protein belongs to the YqgF nuclease family.

It localises to the cytoplasm. In terms of biological role, could be a nuclease involved in processing of the 5'-end of pre-16S rRNA. The protein is Putative pre-16S rRNA nuclease of Listeria monocytogenes serovar 1/2a (strain ATCC BAA-679 / EGD-e).